Reading from the N-terminus, the 103-residue chain is uncharacterized protein (103 aa).

Residues 33 to 57 form a helical membrane-spanning segment; sequence GYVAAIVAGPVSMSPLDWICPLLAI.

It localises to the membrane. This is an uncharacterized protein from Sinorhizobium fredii (strain NBRC 101917 / NGR234).